Here is a 114-residue protein sequence, read N- to C-terminus: Transcription factor S1 (114 aa).

The N-ZR stretch occupies residues 1–43 (MIVVKFCPKCNSMMVPKKSNGKNVYRCTKCGYEKEVPETTIVV). 6 residues coordinate Zn(2+): cysteine 7, cysteine 10, cysteine 27, cysteine 30, cysteine 75, and cysteine 78. The C-ZR stretch occupies residues 63–114 (MPSGAQKIKGVLCPSCKNDEAYFWILQTRRADEPPTRFYKCTKCGKVWREYE). A TFIIS-type zinc finger spans residues 71-111 (KGVLCPSCKNDEAYFWILQTRRADEPPTRFYKCTKCGKVWR). Catalysis depends on residues aspartate 94 and glutamate 95. Zn(2+) is bound by residues cysteine 103 and cysteine 106.

The protein belongs to the archaeal RpoM/eukaryotic RPA12/RPB9/RPC11 RNA polymerase family. As to quaternary structure, interacts with RNA polymerase; probably competes with TFS4 for the same binding site. Zn(2+) is required as a cofactor.

Induces RNA cleavage activity in the RNA polymerase. Induces rapid cleavage of a stalled transcription elongation complex with a 2-nucleotide reduction at the 3' end of the nascent RNA. Truncated RNA is able to resume elongation. During transcription elongation it enhances processivity. Involved in transcriptional proofreading and fidelity. Misincorporation of nucleotides during elongation of transcription leads to arrested elongation complexes which are rescued by TFS-promoted removal of a dinucleotide from the 3'-end. TFS1 is able to induce a cleavage resynthesis cycle in stalled elongation complexes (resulting from the next missing nucleotide or a reduced incorporation rate of a wrong nucleotide) preventing misincorporation and enabling proofreading in a post-incorporation manner. Pausing of elongation complexes is the main determinant of TFS-induced RNA cleavage. This chain is Transcription factor S1, found in Saccharolobus solfataricus (strain ATCC 35092 / DSM 1617 / JCM 11322 / P2) (Sulfolobus solfataricus).